Consider the following 1627-residue polypeptide: Adhesin P1 (1627 aa).

A signal peptide spans 1–59; that stretch reads MHQTKKTALSKSTWILILTATASLATGLTVVGHFTSTTTTLKRQQFSYTRPDEVALRHT. Disordered stretches follow at residues 219 to 238, 252 to 355, 898 to 953, and 1274 to 1362; these read LPQQRTESGQNTSTTGAMFG, NEKL…PWRP, WRND…TTQD, and SFGT…TGND. The span at 224-234 shows a compositional bias: polar residues; it reads TESGQNTSTTG. Positions 261 to 276 are enriched in low complexity; that stretch reads TGSSTTSGSGQSTQRG. The segment covering 282-297 has biased composition (basic and acidic residues); that stretch reads TKVKALKIEVKKKSDS. 3 stretches are compositionally biased toward polar residues: residues 903-933, 939-953, and 1274-1297; these read ASSGQSDENHTKFTSATGMDQQGQSGTSAGN, QDNISKSGDSLTTQD, and SFGTDHSTQPQPQSLKTTTPVFGT. Positions 1307-1320 are enriched in gly residues; that stretch reads SGGGAGGGSSGSGQ. Residues 1341 to 1352 are compositionally biased toward low complexity; that stretch reads STSDGNTSSTNN. The tract at residues 1403 to 1415 is cytadherence epitope; it reads GPQSVKFKSPDQI. The helical transmembrane segment at 1527 to 1547 threads the bilayer; that stretch reads AITVPIVVIVLSVTLGLAIGI. Residues 1589 to 1627 are disordered; the sequence is QAPKRLKQTSAAKPGAPRPPVPPKPGAPKPPVQPPKKPA. A compositionally biased stretch (pro residues) spans 1604–1627; that stretch reads APRPPVPPKPGAPKPPVQPPKKPA.

It belongs to the adhesin P1 family.

It is found in the cell membrane. Its subcellular location is the cell projection. The protein localises to the attachment organelle. It localises to the cell surface. In terms of biological role, the protein is the major adhesin mediating the attachment of this mycoplasma to respiratory epithelium. The protein is Adhesin P1 (mgpA) of Mycoplasma pneumoniae (strain ATCC 29342 / M129 / Subtype 1) (Mycoplasmoides pneumoniae).